A 606-amino-acid polypeptide reads, in one-letter code: MAAVTSEFPSKPISYTSTNTSAKTYYLKSVKKRVTTCFQQLRDKLQSSGSFRKSSSSCLNQIFVRSDFSACGERFRKIFKSARKTELPELWKVPLVAHELTSRQSSQQLQVVARLFSSTQISTKEITYNSNSNTSENNMTIIESNYISVREEYPDIDSEVRAILLSHAQNGITISSIKSEYRKLTGNPFPLHDNVTDFLLTIPNVTAECSESGKRIFNLKASLKNGHLLDMVLNQKERTSDYSSGAPSLENIPRAPPRYWKNPFKRRALSQLNTSPRTVPKITDEKTKDIATRPVSLHQMANEAAESNWCYQDNWKHLNNFYQQASVNAPKMPVPINIYSPDAPEEPINLAPPGHQPSCRTQSQKTEPTENRHLGIFVHPFNGMNIMKRRHEMTPTPTILTSGTYNDSLLTINSDYDAYLLDFPLMGDDFMLYLARMELKCRFRRHERVLQSGLCVSGLTINGARNRLKRVQLPEGTQIIVNIGSVDIMRGKPLVQIEHDFRLLIKEMHNMRLVPILTNLAPLGNYCHDKVLCDKIYRFNKFIRSECCHLKVIDIHSCLINERGVVRFDCFQASPRQVTGSKEPYLFWNKIGRQRVLQVIETSLEY.

The HTH OST-type domain maps to 152 to 221 (EYPDIDSEVR…SGKRIFNLKA (70 aa)). Residues serine 270 and serine 275 each carry the phosphoserine modification. Residues 425 to 439 (LMGDDFMLYLARMEL) form a leucine-zipper region.

Interacts with smaug (smg). In terms of assembly, interacts with yl/yolkless. In terms of tissue distribution, begins to accumulate at the posterior pole of the oocyte from stage 8 onwards.

The protein resides in the endosome. Organizes the germ plasm and directs localization of the posterior determinant nanos. Oskar protein is required to keep nanos (nos) RNA and staufen protein at the posterior pole. This chain is Maternal effect protein oskar (osk), found in Drosophila melanogaster (Fruit fly).